The sequence spans 474 residues: Probable diacyglycerol O-acyltransferase Tgs4 (474 aa).

H135 functions as the Proton acceptor in the catalytic mechanism.

Belongs to the long-chain O-acyltransferase family.

It catalyses the reaction an acyl-CoA + a 1,2-diacyl-sn-glycerol = a triacyl-sn-glycerol + CoA. Its pathway is glycerolipid metabolism; triacylglycerol biosynthesis. Required for maintaining the appropriate mycolic acid composition and permeability of the envelope on its exposure to acidic pH. In Mycobacterium tuberculosis (strain CDC 1551 / Oshkosh), this protein is Probable diacyglycerol O-acyltransferase Tgs4 (tgs4).